The chain runs to 215 residues: MQKSIIKNGLLLSGFALICTAAVALVNEATKDKIAEQQRLELTRILHQIVPDEIHDNDLGGSCILVHNADALGTDEPMPVYLASSANEPVALAIETIAPDGYNGNIRLIIGVDLKGKVLGVRTLTHQETPGLGDKIELRKSNWVLSFNDKVFSDKANDRWKVKKDGGDFDQFTGATITPRAYLKAVSRTLIFVSANQAEWFNRPLGCDNGANADE.

The helical transmembrane segment at 9–29 threads the bilayer; sequence GLLLSGFALICTAAVALVNEA. Thr-176 carries the post-translational modification FMN phosphoryl threonine.

This sequence belongs to the RnfG family. The complex is composed of six subunits: RnfA, RnfB, RnfC, RnfD, RnfE and RnfG. It depends on FMN as a cofactor.

Its subcellular location is the cell inner membrane. Part of a membrane-bound complex that couples electron transfer with translocation of ions across the membrane. The protein is Ion-translocating oxidoreductase complex subunit G of Shewanella amazonensis (strain ATCC BAA-1098 / SB2B).